The following is a 542-amino-acid chain: Homeobox and leucine zipper protein Homez (542 aa).

A DNA-binding region (homeobox 1) is located at residues 55 to 114 (WTQAIQTSELDGNEHLLQAFSYFPYPSLADIALLCLRHGLQMEKVKTWFMAQRLRCGISW). Positions 165–193 (LSPLAPSEQPTHMKGLKVEPEEPSQVSQL) are disordered. Glycyl lysine isopeptide (Lys-Gly) (interchain with G-Cter in SUMO2) cross-links involve residues K181 and K201. The disordered stretch occupies residues 250 to 307 (VHQPDKPASVSLLDNSCKEESEPSGIPPSSSTSSPSFQALANGTTATPKPLQPLGCIS). The span at 272–285 (PSGIPPSSSTSSPS) shows a compositional bias: low complexity. A compositionally biased stretch (polar residues) spans 286 to 296 (FQALANGTTAT). S345 carries the post-translational modification Phosphoserine. 2 DNA-binding regions (homeobox) span residues 349 to 409 (QHQR…KHGQ) and 443 to 502 (TPPL…AEVV). The short motif at 352 to 357 (RKTKRK) is the Nuclear localization signal element. 2 disordered regions span residues 424-454 (FQDP…PPPD) and 501-542 (VVVC…IIWD). A Phosphothreonine modification is found at T443. Over residues 444–454 (PPLPAPPPPPD) the composition is skewed to pro residues. The segment covering 505–542 (LDEEDEEDEEDELPEDGEEEEEEEEDDDDGDDDVIIWD) has biased composition (acidic residues).

In terms of assembly, homodimer or heterodimer (Potential). Interacts with HOXC8. In terms of tissue distribution, ubiquitous. Strongly expressed in testis.

It is found in the nucleus. Functionally, may function as a transcriptional regulator. This Mus musculus (Mouse) protein is Homeobox and leucine zipper protein Homez (Homez).